The chain runs to 77 residues: uncharacterized protein (77 aa).

This is an uncharacterized protein from Vaccinia virus (strain Copenhagen) (VACV).